Consider the following 820-residue polypeptide: Leucine--tRNA ligase (820 aa).

The 'HIGH' region signature appears at 40-51 (PYPSGAGLHVGH). The 'KMSKS' region motif lies at 601-605 (KMSKS). Lys604 is an ATP binding site.

The protein belongs to the class-I aminoacyl-tRNA synthetase family.

The protein resides in the cytoplasm. It catalyses the reaction tRNA(Leu) + L-leucine + ATP = L-leucyl-tRNA(Leu) + AMP + diphosphate. This Chlamydia abortus (strain DSM 27085 / S26/3) (Chlamydophila abortus) protein is Leucine--tRNA ligase.